Consider the following 500-residue polypeptide: Lysine--tRNA ligase (500 aa).

Mg(2+) contacts are provided by Glu410 and Glu417.

The protein belongs to the class-II aminoacyl-tRNA synthetase family. In terms of assembly, homodimer. It depends on Mg(2+) as a cofactor.

The protein localises to the cytoplasm. It carries out the reaction tRNA(Lys) + L-lysine + ATP = L-lysyl-tRNA(Lys) + AMP + diphosphate. The protein is Lysine--tRNA ligase of Pseudomonas entomophila (strain L48).